A 247-amino-acid chain; its full sequence is Ubiquinone biosynthesis O-methyltransferase (247 aa).

4 residues coordinate S-adenosyl-L-methionine: arginine 39, glycine 70, aspartate 91, and methionine 134.

It belongs to the methyltransferase superfamily. UbiG/COQ3 family.

The enzyme catalyses a 3-demethylubiquinol + S-adenosyl-L-methionine = a ubiquinol + S-adenosyl-L-homocysteine + H(+). It catalyses the reaction a 3-(all-trans-polyprenyl)benzene-1,2-diol + S-adenosyl-L-methionine = a 2-methoxy-6-(all-trans-polyprenyl)phenol + S-adenosyl-L-homocysteine + H(+). It functions in the pathway cofactor biosynthesis; ubiquinone biosynthesis. In terms of biological role, O-methyltransferase that catalyzes the 2 O-methylation steps in the ubiquinone biosynthetic pathway. The sequence is that of Ubiquinone biosynthesis O-methyltransferase from Cereibacter sphaeroides (strain ATCC 17025 / ATH 2.4.3) (Rhodobacter sphaeroides).